Reading from the N-terminus, the 702-residue chain is Kinesin-like protein KIF3A (702 aa).

In terms of domain architecture, Kinesin motor spans 14 to 345 (NVKVVVRCRP…LRYANRAKNI (332 aa)). Position 100 to 107 (100 to 107 (GQTGTGKT)) interacts with ATP. Positions 355–593 (PKDALLRQFQ…LSRELRLQML (239 aa)) form a coiled coil. Disordered regions lie at residues 372-424 (KKLE…KMIE) and 667-702 (LMKLERPRTSKGKARPKTGRRKRSAKPETVIDSLLQ). The segment covering 376–400 (EGEEISGSDISGSEEDDDEEGEVGE) has biased composition (acidic residues). Residues 410–424 (DQAGKKKVSPDKMIE) show a composition bias toward basic and acidic residues. Residues 600 to 702 (PRDYQEMIEN…PETVIDSLLQ (103 aa)) form a globular region. Residues 675–690 (TSKGKARPKTGRRKRS) are compositionally biased toward basic residues. S690 carries the phosphoserine modification.

The protein belongs to the TRAFAC class myosin-kinesin ATPase superfamily. Kinesin family. Kinesin II subfamily. As to quaternary structure, heterodimer of KIF3A and KIF3B. Interacts with CIMAP3. Interacts with CLN3. Interacts with DCTN1. Interacts with FLCN. Interacts with AP3B1.

It is found in the cytoplasm. The protein localises to the cytoskeleton. Its subcellular location is the cell projection. It localises to the cilium. The protein resides in the microtubule organizing center. It is found in the centrosome. The protein localises to the centriole. Microtubule-based anterograde translocator for membranous organelles. Plus end-directed microtubule sliding activity in vitro. Plays a role in primary cilia formation. Plays a role in centriole cohesion and subdistal appendage organization and function. Regulates the formation of the subdistal appendage via recruitment of DCTN1 to the centriole. Also required for ciliary basal feet formation and microtubule anchoring to mother centriole. The chain is Kinesin-like protein KIF3A (KIF3A) from Macaca fascicularis (Crab-eating macaque).